The sequence spans 595 residues: Actin-histidine N-methyltransferase (595 aa).

A disordered region spans residues 1–22 (MGKKSRVKTQKSGTGATATVSP). Positions 10–20 (QKSGTGATATV) are enriched in polar residues. S-adenosyl-L-methionine-binding positions include Arg-75, 104–106 (EGF), Arg-254, 275–279 (DMCNH), and 325–327 (SGF). In terms of domain architecture, SET spans 94–314 (EGFEMVNFKE…AGEQIYIFYG (221 aa)). Residue Ser-513 is modified to Phosphoserine. Over residues 549 to 573 (ENGLVNGENSIPNGTRSENENLNQE) the composition is skewed to polar residues. The interval 549-595 (ENGLVNGENSIPNGTRSENENLNQEGSKRAVEDAKGSSSDSTDEVKE) is disordered. Basic and acidic residues predominate over residues 574 to 583 (GSKRAVEDAK).

Belongs to the class V-like SAM-binding methyltransferase superfamily. SETD3 actin-histidine methyltransferase family. As to quaternary structure, interacts with MYOD1. Phosphorylated by GSK3B, which is required for recognition by the SCF(FBXW7) complex and subsequent degradation. In terms of processing, ubiquitinated by the SCF(FBXW7) complex following phosphorylation by GSK3B, leading to its degradation by the proteasome.

The protein resides in the cytoplasm. Its subcellular location is the nucleus. The catalysed reaction is L-histidyl-[protein] + S-adenosyl-L-methionine = N(tele)-methyl-L-histidyl-[protein] + S-adenosyl-L-homocysteine + H(+). In terms of biological role, protein-histidine N-methyltransferase that specifically mediates 3-methylhistidine (tele-methylhistidine) methylation of actin at 'His-73'. Histidine methylation of actin is required for smooth muscle contraction of the laboring uterus during delivery. Does not have protein-lysine N-methyltransferase activity and probably only catalyzes histidine methylation of actin. This chain is Actin-histidine N-methyltransferase, found in Plecturocebus moloch (Dusky titi monkey).